Reading from the N-terminus, the 342-residue chain is Glycerol-3-phosphate dehydrogenase [NAD(P)+] (342 aa).

Positions 13, 14, and 108 each coordinate NADPH. Sn-glycerol 3-phosphate is bound by residues K108, G139, and S141. Residue A143 coordinates NADPH. Sn-glycerol 3-phosphate-binding residues include K194, D247, S257, R258, and N259. K194 serves as the catalytic Proton acceptor. An NADPH-binding site is contributed by R258. The NADPH site is built by V282 and E284.

The protein belongs to the NAD-dependent glycerol-3-phosphate dehydrogenase family.

The protein resides in the cytoplasm. The catalysed reaction is sn-glycerol 3-phosphate + NAD(+) = dihydroxyacetone phosphate + NADH + H(+). The enzyme catalyses sn-glycerol 3-phosphate + NADP(+) = dihydroxyacetone phosphate + NADPH + H(+). It functions in the pathway membrane lipid metabolism; glycerophospholipid metabolism. In terms of biological role, catalyzes the reduction of the glycolytic intermediate dihydroxyacetone phosphate (DHAP) to sn-glycerol 3-phosphate (G3P), the key precursor for phospholipid synthesis. This Lactococcus lactis subsp. cremoris (strain SK11) protein is Glycerol-3-phosphate dehydrogenase [NAD(P)+].